The chain runs to 266 residues: Short-chain dehydrogenase/reductase tropE (266 aa).

Residues Leu18, Asp69, and Asn96 each coordinate NADP(+). The active-site Proton donor is the Ser147. NADP(+) contacts are provided by Tyr181, Lys185, and Thr216. Tyr181 acts as the Proton acceptor in catalysis. Lys185 acts as the Lowers pKa of active site Tyr in catalysis.

The protein belongs to the short-chain dehydrogenases/reductases (SDR) family.

The protein operates within secondary metabolite biosynthesis. Its function is as follows. Short-chain dehydrogenase/reductase; part of the gene cluster that mediates the biosynthesis of the tropolone class of fungal maleic anhydrides. The pathway begins with the synthesis of 3-methylorcinaldehyde by the non-reducing polyketide synthase (PKS) tropA. 3-methylorcinaldehyde is the substrate for the FAD-dependent monooxygenase tropB to yield a dearomatized hydroxycyclohexadione. The 2-oxoglutarate-dependent dioxygenase tropC then performs the oxidative ring expansion to provide the first tropolone metabolite stipitaldehyde. Trop D converts stipitaldehyde into stipitacetal which is in turn converted to stipitalide by the short-chain dehydrogenase/reductase tropE. The next steps involve tropF, tropG, tropH, tropI and tropJ to form successive tropolone maleic anhydrides including stipitaldehydic, stipitatonic and stipitatic acids. The sequence is that of Short-chain dehydrogenase/reductase tropE from Talaromyces stipitatus (strain ATCC 10500 / CBS 375.48 / QM 6759 / NRRL 1006) (Penicillium stipitatum).